We begin with the raw amino-acid sequence, 776 residues long: MSIPANVLMEISFQELTSKKSEEYERKRLNEIGDLLTPQKIEEVLNCKDTKQRNVSLEDIFQDFLNFIITKNQEMFSMDCNSICKSYVLKVAEEKIEKLLKENGTLKNEEKCLRMQIVAQEEYVAPLIQKLEIIEKKLDKSFRKNMEDELRITRLASENNVLISRIDRTKRHFSELFTQKQMLQLQNENFKDDYEKIKEENKRLYKERKSFLSKIEKSACEIHDLKESDSFKDHEILRLKEERTAAMQAIDDISGTIETIKSDCYKVESENKGLINEVMDMRNFVQQLEQELYAFEDDYSRIQNDEELLKVGMIHLNKSENRTVEEMKIGDFGNTEEAKDVCVSDEDIHNVNIKQITTLIGKMSQVQIECKRLRKENLFLQSERTHLLRELEELRHLATSAKEDFVKVEKLNKIIKDENENLKEYIRNNSLSFQATAGELTQCKQLPQPRITGNDQENSHYTGAGNNCLELVGKENNCKNQYPQYFSNIDESNAFINNQCLELEALNRKNDLIRGELDSLKEKNLVAQKQLKSANNTLHVRAKHIQILENTNQSLKKNLENGRAEFRLKEIALIDLANQQIKNQDKTIHDLNTELCSLTLDYCNTAVERDTLRFRALEYLDHNKQTNPLPYHIVYMFSFETSPTVFQTSPEEDKENVNNIKISQPRNSLQTNGYIEGMANNVLDASFNVEDESHAISDSELGYFCEDQSNIYEVEDMRYYLFYTEEEKNMLPGFIVNARPANLDLFPCCYETTDKRSKHLKNMLNKKKLIKHIFHL.

5 coiled-coil regions span residues 87 to 122 (YVLKVAEEKIEKLLKENGTLKNEEKCLRMQIVAQEE), 173 to 227 (FSEL…DLKE), 265 to 307 (YKVE…NDEE), 362 to 430 (KMSQ…RNNS), and 496 to 595 (INNQ…NTEL).

In Schizosaccharomyces pombe (strain 972 / ATCC 24843) (Fission yeast), this protein is Meiotic expression up-regulated protein 1/2 (meu1).